The chain runs to 372 residues: Protein L-Myc-1a (372 aa).

Disordered stretches follow at residues 172–226 (KVAA…ADPF) and 243–306 (NYAA…DDLR). A compositionally biased stretch (acidic residues) spans 187–197 (SDDDEDDDEID). Positions 269–284 (ESSSAPSSPLSSPATS) are enriched in low complexity. Residues 289 to 341 (STEQRRNFLERKRRDDLRSRFQALREEIPGLSGSSKTSKVAILTQATDYLLQL) enclose the bHLH domain. Basic and acidic residues predominate over residues 290 to 306 (TEQRRNFLERKRRDDLR). A leucine-zipper region spans residues 341–369 (LHSSQRRQAQEKRKLKAKQQQLLRRISAL).

In terms of assembly, efficient DNA binding requires dimerization with another bHLH protein. Binds DNA as a heterodimer with max. In terms of tissue distribution, uterus.

It is found in the nucleus. The chain is Protein L-Myc-1a from Danio rerio (Zebrafish).